The sequence spans 238 residues: 4-hydroxy-tetrahydrodipicolinate reductase (238 aa).

12-17 contributes to the NAD(+) binding site; it reads GASGRM. An NADP(+)-binding site is contributed by R40. NAD(+) is bound by residues 93 to 95 and 117 to 120; these read GTT and ASNF. H149 (proton donor/acceptor) is an active-site residue. Position 150 (H150) interacts with (S)-2,3,4,5-tetrahydrodipicolinate. K153 functions as the Proton donor in the catalytic mechanism. 159–160 serves as a coordination point for (S)-2,3,4,5-tetrahydrodipicolinate; that stretch reads GT.

Belongs to the DapB family.

Its subcellular location is the cytoplasm. The catalysed reaction is (S)-2,3,4,5-tetrahydrodipicolinate + NAD(+) + H2O = (2S,4S)-4-hydroxy-2,3,4,5-tetrahydrodipicolinate + NADH + H(+). It catalyses the reaction (S)-2,3,4,5-tetrahydrodipicolinate + NADP(+) + H2O = (2S,4S)-4-hydroxy-2,3,4,5-tetrahydrodipicolinate + NADPH + H(+). Its pathway is amino-acid biosynthesis; L-lysine biosynthesis via DAP pathway; (S)-tetrahydrodipicolinate from L-aspartate: step 4/4. Its function is as follows. Catalyzes the conversion of 4-hydroxy-tetrahydrodipicolinate (HTPA) to tetrahydrodipicolinate. The polypeptide is 4-hydroxy-tetrahydrodipicolinate reductase (Xanthomonas axonopodis pv. citri (strain 306)).